The chain runs to 583 residues: Bifunctional lycopene cyclase/phytoene synthase (583 aa).

The segment at 1–243 (MGFDYALVHL…IVFGQLAFDN (243 aa)) is lycopene beta-cyclase. 7 consecutive transmembrane segments (helical) span residues 3 to 23 (FDYA…LTWL), 35 to 55 (KVGY…SYLI), 75 to 97 (IPLE…YLLL), 120 to 140 (YMRL…WRCI), 151 to 171 (LILV…YQFI), 173 to 193 (ALPV…LWVV), and 221 to 241 (IEEA…QLAF). The interval 250-583 (TFPHLFTGPS…MVAWRTLNSK (334 aa)) is phytoene synthase.

The protein in the N-terminal section; belongs to the lycopene beta-cyclase family. It in the C-terminal section; belongs to the phytoene/squalene synthase family.

The protein resides in the membrane. It catalyses the reaction all-trans-lycopene = gamma-carotene. The enzyme catalyses gamma-carotene = all-trans-beta-carotene. It carries out the reaction 2 (2E,6E,10E)-geranylgeranyl diphosphate = 15-cis-phytoene + 2 diphosphate. Its pathway is carotenoid biosynthesis; beta-carotene biosynthesis. It functions in the pathway carotenoid biosynthesis; phytoene biosynthesis; all-trans-phytoene from geranylgeranyl diphosphate: step 1/1. Bifunctional enzyme that catalyzes the reactions from geranylgeranyl diphosphate to phytoene (phytoene synthase) and lycopene to beta-carotene via the intermediate gamma-carotene (lycopene cyclase). This Pyrenophora tritici-repentis (strain Pt-1C-BFP) (Wheat tan spot fungus) protein is Bifunctional lycopene cyclase/phytoene synthase.